The primary structure comprises 324 residues: Putative transport protein TM_1187 (324 aa).

8 helical membrane passes run 12–32, 62–82, 105–125, 131–151, 190–210, 227–247, 252–272, and 285–305; these read LYLV…TALI, ISNV…FPVI, IPGW…EGAL, IVGY…TAFI, GGQV…AFIF, FVPY…AFSV, GLLI…WVLA, and FIIL…GVLI.

It belongs to the autoinducer-2 exporter (AI-2E) (TC 2.A.86) family.

It is found in the cell membrane. The chain is Putative transport protein TM_1187 from Thermotoga maritima (strain ATCC 43589 / DSM 3109 / JCM 10099 / NBRC 100826 / MSB8).